A 446-amino-acid polypeptide reads, in one-letter code: MTDEESRALYDRALSVMPGGVNSSVRATQPYPFFIERGDGATVIDADGTRYLDYVMGYGPLLYGHDLPEPVNAAIQSYTSEGPMYGAPTPIEVEHAEFVARHVPSVEMIRFVNSGTEATVSAVRLARGYTGRDKIVVMKGGYHGAQESTLVEGDPMHVEPSTPGIPSSFAKHTLPVPFNDLEAITTVFETHGEDIAAVLTEPILANNGIVRPVDGYLEHLRSLTTEHNSLLIFDEVITGFRVGGLGCAQSKFGVTPDVTTFGKIIGGGFPVGAIGGRADIIEHFTPSGDVFQSGTFSGHPVTMAAGYESLKYAAENDVYDHVNRLGERLRGGITDIATDQSPSAIVVGLDSMFKTVFEREGSTTDDGDVCSAGCEQRESCMRYDDCPKTGADVSSAETERWERIFWQEMRDHNIFLTANQFESQFVSYAHTDEDIDRTLEAYKSAL.

N6-(pyridoxal phosphate)lysine is present on Lys-263.

Belongs to the class-III pyridoxal-phosphate-dependent aminotransferase family. HemL subfamily. Requires pyridoxal 5'-phosphate as cofactor.

It localises to the cytoplasm. The enzyme catalyses (S)-4-amino-5-oxopentanoate = 5-aminolevulinate. It functions in the pathway porphyrin-containing compound metabolism; protoporphyrin-IX biosynthesis; 5-aminolevulinate from L-glutamyl-tRNA(Glu): step 2/2. This Haloquadratum walsbyi (strain DSM 16790 / HBSQ001) protein is Glutamate-1-semialdehyde 2,1-aminomutase.